The sequence spans 675 residues: Acyl-coenzyme A oxidase 3, peroxisomal (675 aa).

Residues methionine 1–cysteine 34 constitute a peroxisome transit peptide. Alanine 442–leucine 457 provides a ligand contact to FAD.

Belongs to the acyl-CoA oxidase family. It depends on FAD as a cofactor. As to expression, most abundant in flowers and senescing rosette leaves. Lower expression in hypocotyls, stems, young rosette leaves, cotyledons, cauline leaves and root tip of young seedlings.

It localises to the peroxisome. It catalyses the reaction a 2,3-saturated acyl-CoA + O2 = a (2E)-enoyl-CoA + H2O2. It functions in the pathway lipid metabolism; peroxisomal fatty acid beta-oxidation. Its function is as follows. Catalyzes the desaturation of medium-chain acyl-CoAs to 2-trans-enoyl-CoAs. Active on C8:0- to C14:0-CoA with a maximal activity on C12:0-CoA. The sequence is that of Acyl-coenzyme A oxidase 3, peroxisomal (ACX3) from Arabidopsis thaliana (Mouse-ear cress).